The chain runs to 208 residues: Na(+)-translocating NADH-quinone reductase subunit D (208 aa).

Transmembrane regions (helical) follow at residues 42–62, 72–92, 103–123, 131–151, and 178–198; these read FVMA…VSLI, IIVQ…ILKA, VFVG…AFAM, FVDG…VAFF, and NGLF…IWGL.

Belongs to the NqrDE/RnfAE family. Composed of six subunits; NqrA, NqrB, NqrC, NqrD, NqrE and NqrF.

The protein resides in the cell inner membrane. It carries out the reaction a ubiquinone + n Na(+)(in) + NADH + H(+) = a ubiquinol + n Na(+)(out) + NAD(+). Its function is as follows. NQR complex catalyzes the reduction of ubiquinone-1 to ubiquinol by two successive reactions, coupled with the transport of Na(+) ions from the cytoplasm to the periplasm. NqrA to NqrE are probably involved in the second step, the conversion of ubisemiquinone to ubiquinol. The sequence is that of Na(+)-translocating NADH-quinone reductase subunit D from Haemophilus influenzae (strain 86-028NP).